The sequence spans 330 residues: Erlin-2-B (330 aa).

The Cytoplasmic segment spans residues 1–2 (MS). The helical transmembrane segment at 3 to 23 (HAGAIAALGVALIAAALFSAI) threads the bilayer. At 24-330 (HKIEEGHVGV…NEPAAAEELK (307 aa)) the chain is on the lumenal side. Asn106 carries an N-linked (GlcNAc...) asparagine glycan. A disordered region spans residues 308-330 (SSSAGPRVQSAKRNEPAAAEELK). Positions 319 to 330 (KRNEPAAAEELK) are enriched in basic and acidic residues.

It belongs to the band 7/mec-2 family.

The protein localises to the endoplasmic reticulum membrane. Its function is as follows. Mediates the endoplasmic reticulum-associated degradation (ERAD) of inositol 1,4,5-trisphosphate receptors (IP3Rs). Promotes sterol-accelerated ERAD of HMGCR. Involved in regulation of cellular cholesterol homeostasis by regulation the SREBP signaling pathway. The sequence is that of Erlin-2-B (erlin2-b) from Xenopus laevis (African clawed frog).